The chain runs to 113 residues: Tyrosine-protein phosphatase 15 (113 aa).

One can recognise a Tyrosine-protein phosphatase domain in the interval 1-113 (WRMVYDNNVN…RSTGDGVALI (113 aa)).

It belongs to the protein-tyrosine phosphatase family.

It carries out the reaction O-phospho-L-tyrosyl-[protein] + H2O = L-tyrosyl-[protein] + phosphate. The polypeptide is Tyrosine-protein phosphatase 15 (STY-15) (Styela plicata (Wrinkled sea squirt)).